Consider the following 587-residue polypeptide: Kelch-like protein 3 (587 aa).

Position 10 is a phosphoserine (Ser10). The 68-residue stretch at 50 to 117 (CDVMIVAEDV…VYTAEIEVTE (68 aa)) folds into the BTB domain. The BACK domain maps to 152-254 (CLGIRAFADV…PRDYLVQTVE (103 aa)). Thr295 is modified (phosphothreonine). Kelch repeat units follow at residues 302 to 347 (VMIV…FMAG), 348 to 394 (HVYA…VLND), 396 to 441 (LYAV…VVEG), 442 to 490 (KLYA…VLSG), 491 to 537 (QLYA…AVNG), and 539 to 585 (LYVV…VIHK). Thr375 is modified (phosphothreonine). Phosphoserine occurs at positions 376 and 433.

Belongs to the KLHL3 family. As to quaternary structure, homodimer. Component of the BCR(KLHL3) E3 ubiquitin ligase complex, at least composed of CUL3 and KLHL3 and RBX1. Interacts with CLDN8. In terms of processing, phosphorylation at Ser-433 by PKA or PKC decreases the interaction with WNK1 and WNK4, leading to inhibit their degradation by the BCR(KLHL3) complex. Phosphorylated at Ser-433 by PKC in response to angiotensin II signaling, decreasing ability to promote degradation of WNK1 and WNK4, leading to activation of Na-Cl cotransporter SLC12A3/NCC. Phosphorylation at Ser-433 is increased by insulin. Dephosphorylated at Ser-433 by calcineurin PPP3CA, promoting degradation of WNK1 and WNK4.

Its subcellular location is the cytoplasm. The protein localises to the cytoskeleton. The protein resides in the cytosol. It participates in protein modification; protein ubiquitination. Functionally, substrate-specific adapter of a BCR (BTB-CUL3-RBX1) E3 ubiquitin ligase complex that acts as a regulator of ion transport in the distal nephron. The BCR(KLHL3) complex acts by mediating ubiquitination and degradation of WNK1 and WNK4, two activators of Na-Cl cotransporter SLC12A3/NCC in distal convoluted tubule cells of kidney, thereby regulating NaCl reabsorption. The BCR(KLHL3) complex also mediates ubiquitination and degradation of WNK3. The BCR(KLHL3) complex also mediates ubiquitination of CLDN8, a tight-junction protein required for paracellular chloride transport in the kidney, leading to its degradation. This Pongo abelii (Sumatran orangutan) protein is Kelch-like protein 3 (KLHL3).